Consider the following 114-residue polypeptide: BolA-like protein DDB_G0274169 (114 aa).

Residues T88 to I98 are compositionally biased toward polar residues. Positions T88–K114 are disordered.

It belongs to the BolA/IbaG family.

In Dictyostelium discoideum (Social amoeba), this protein is BolA-like protein DDB_G0274169.